A 311-amino-acid chain; its full sequence is Ribonuclease HIII (311 aa).

The 217-residue stretch at 95–311 (MSIVGSDEVG…NTEKALRLLR (217 aa)) folds into the RNase H type-2 domain. Residues Asp101, Glu102, and Asp206 each contribute to the a divalent metal cation site.

The protein belongs to the RNase HII family. RnhC subfamily. Requires Mn(2+) as cofactor. The cofactor is Mg(2+).

The protein resides in the cytoplasm. It carries out the reaction Endonucleolytic cleavage to 5'-phosphomonoester.. Its function is as follows. Endonuclease that specifically degrades the RNA of RNA-DNA hybrids. In Bacillus cereus (strain ATCC 14579 / DSM 31 / CCUG 7414 / JCM 2152 / NBRC 15305 / NCIMB 9373 / NCTC 2599 / NRRL B-3711), this protein is Ribonuclease HIII.